The sequence spans 350 residues: Ribosome production factor 2 homolog (350 aa).

Residues 28–266 (KTCLFLRGTT…LGRMREPDPA (239 aa)) enclose the Brix domain. Over residues 192–202 (PTSSTSTNNDG) the composition is skewed to polar residues. 2 disordered regions span residues 192-219 (PTSS…SIDP) and 301-350 (MGKT…KVKG).

Belongs to the RPF2 family. Component of a hexameric 5S RNP precursor complex, composed of 5S RNA, RRS1, RPF2, RPL5, RPL11 and SYO1; this complex acts as a precursor for ribosome assembly.

The protein resides in the nucleus. It is found in the nucleolus. Involved in ribosomal large subunit assembly. This Chaetomium thermophilum (strain DSM 1495 / CBS 144.50 / IMI 039719) (Thermochaetoides thermophila) protein is Ribosome production factor 2 homolog.